A 330-amino-acid polypeptide reads, in one-letter code: Basic leucine zipper 2 (330 aa).

Residues 1–207 (MAQLPPKIPT…NRQSAQRSRV (207 aa)) are disordered. Basic residues predominate over residues 21–34 (GHHHHAAHGHHHQR). The span at 45 to 56 (PLPPFPLPPPAP) shows a compositional bias: pro residues. Composition is skewed to low complexity over residues 57–72 (ANGG…QHQP) and 139–151 (QPAA…SSPS). Residues 155–166 (SMNDEKQDKGET) show a composition bias toward basic and acidic residues. One can recognise a bZIP domain in the interval 188–244 (DPKRVKRILANRQSAQRSRVRKLQYISELERSVTSLQTEVSALSPRVAFLDHQRSLL). The segment at 190–209 (KRVKRILANRQSAQRSRVRK) is basic motif. The tract at residues 216-244 (LERSVTSLQTEVSALSPRVAFLDHQRSLL) is leucine-zipper. The segment at 267–330 (GGTEEGDREA…LVIGRDPDAL (64 aa)) is disordered.

In terms of tissue distribution, expressed in roots, shoots and panicles.

It localises to the nucleus. Functionally, transcription regulator. The sequence is that of Basic leucine zipper 2 (BZIP02) from Oryza sativa subsp. japonica (Rice).